We begin with the raw amino-acid sequence, 576 residues long: Boron transporter 1 (576 aa).

At 1–84 the chain is on the cytoplasmic side; sequence MSNESTRVTV…SDWVDAFNYR (84 aa). Positions 19–48 are disordered; the sequence is ECAQALERTNDELDRESSVSESRSDEESHE. Basic and acidic residues predominate over residues 26 to 48; the sequence is RTNDELDRESSVSESRSDEESHE. The chain crosses the membrane as a helical span at residues 85–105; it reads VIPSIVDTYFNNLLPAIAFAQ. Residues 106 to 116 are Extracellular-facing; sequence DMFDRTDNSYG. A helical membrane pass occupies residues 117-134; sequence VNEVLLSSAMAGIVFGVL. Residues 135-140 lie on the Cytoplasmic side of the membrane; sequence GGQPLC. A helical transmembrane segment spans residues 141 to 160; it reads IVGVTGPISIFNYTVYEIIK. The Extracellular portion of the chain corresponds to 161-165; sequence PLNTS. The chain crosses the membrane as a helical span at residues 166–186; the sequence is YFGFMFWICMWSMIFHLVLAF. The Cytoplasmic portion of the chain corresponds to 187-192; that stretch reads TNAVCL. The chain crosses the membrane as a helical span at residues 193–213; sequence LQYVTTFPCDIFGLFINVVYI. Over 214-235 the chain is Extracellular; the sequence is QKGIQILTRQFSAKSGEKSVQD. The helical transmembrane segment at 236–256 threads the bilayer; that stretch reads GFASVVVALVMTAFGLFFKLF. Topologically, residues 257 to 274 are cytoplasmic; that stretch reads HYYPLFSHRIRTFISDYS. A helical transmembrane segment spans residues 275–295; the sequence is TALSVLFWSSFTHFGGYLHDV. The Extracellular portion of the chain corresponds to 296-329; it reads KFKKLPITKAFFPTSKVNRPQNTWLAYEPIPVKD. Residues 330–350 traverse the membrane as a helical segment; the sequence is VFIALPFGIFLTILFYFDHNV. Topologically, residues 351–373 are cytoplasmic; that stretch reads SSLMAQRHQYKLKKPSSFHYDFA. A helical membrane pass occupies residues 374-394; that stretch reads LLGLTTCISGVLGIPAPNGLI. The Extracellular segment spans residues 395-438; sequence PQAPLHTETLLVRDSNQKVISCVEQRFTNTFQGLMILGTMTRPL. The helical transmembrane segment at 439–459 threads the bilayer; sequence LVCLGEIPQAVLSGLFFIMGI. Over 460 to 495 the chain is Cytoplasmic; the sequence is NGLMTNSIIQRLVFLFSDPNRRDNTSPLMKVSKKSM. A helical membrane pass occupies residues 496–516; it reads LIFLSFSLTGFAGEFAITNTI. Residues 517-518 are Extracellular-facing; it reads AA. A helical membrane pass occupies residues 519–539; sequence IGFPLVLLLSVLVSFSFAYIF. Over 540 to 576 the chain is Cytoplasmic; that stretch reads PTEELKILDTNVAQKFTIKNLLLENIRDAKFCDKHED.

The protein belongs to the anion exchanger (TC 2.A.31) family.

It is found in the cell membrane. Its subcellular location is the vacuole membrane. Functionally, functions in boric acid/borate export across the plasma membrane, and thereby protects yeast cells from boron toxicity. Involved in the trafficking of proteins to the vacuole. In Saccharomyces cerevisiae (strain ATCC 204508 / S288c) (Baker's yeast), this protein is Boron transporter 1 (BOR1).